The primary structure comprises 375 residues: MKVWLLLGLLLVHEALEDVTGQHLPKNKRPKEPGENRIKPTNKKVKPKIPKMKDRDSANSAPKTQSIMMQVLDKGRFQKPAATLSLLAGQTVELRCKGSRIGWSYPAYLDTFKDSRLSVKQNERYGQLTLVNSTSADTGEFSCWVQLCSGYICRKDEAKTGSTYIFFTEKGELFVPSPSYFDVVYLNPDRQAVVPCRVTVLSAKVTLHREFPAKEIPANGTDIVYDMKRGFVYLQPHSEHQGVVYCRAEAGGRSQISVKYQLLYVAVPSGPPSTTILASSNKVKSGDDISVLCTVLGEPDVEVEFTWIFPGQKDERPVTIQDTWRLIHRGLGHTTRISQSVITVEDFETIDAGYYICTAQNLQGQTTVATTVEFS.

A signal peptide spans 1–21 (MKVWLLLGLLLVHEALEDVTG). Residues 22–64 (QHLPKNKRPKEPGENRIKPTNKKVKPKIPKMKDRDSANSAPKT) form a disordered region. Over residues 40-50 (PTNKKVKPKIP) the composition is skewed to basic residues. The Ig-like C2-type 1 domain occupies 62–159 (PKTQSIMMQV…GYICRKDEAK (98 aa)). An intrachain disulfide couples C96 to C143. Residues N132 and N219 are each glycosylated (N-linked (GlcNAc...) asparagine). One can recognise an Ig-like C2-type 2 domain in the interval 272-375 (PSTTILASSN…TTVATTVEFS (104 aa)). An intrachain disulfide couples C293 to C357.

As to quaternary structure, forms a complex composed of PDGFRL, TNK2 and GRB2. In terms of tissue distribution, expressed in colon, lung and liver.

It is found in the secreted. In Homo sapiens (Human), this protein is Platelet-derived growth factor receptor-like protein (PDGFRL).